Here is a 330-residue protein sequence, read N- to C-terminus: Aspartate--ammonia ligase (330 aa).

Belongs to the class-II aminoacyl-tRNA synthetase family. AsnA subfamily.

It is found in the cytoplasm. It carries out the reaction L-aspartate + NH4(+) + ATP = L-asparagine + AMP + diphosphate + H(+). Its pathway is amino-acid biosynthesis; L-asparagine biosynthesis; L-asparagine from L-aspartate (ammonia route): step 1/1. The protein is Aspartate--ammonia ligase of Streptococcus pyogenes serotype M1.